We begin with the raw amino-acid sequence, 205 residues long: Guanylate kinase (205 aa).

The region spanning 6 to 184 is the Guanylate kinase-like domain; sequence GLLIVLSGPA…AVERIKAIVT (179 aa). 13-20 serves as a coordination point for ATP; that stretch reads GPAGVGKG.

Belongs to the guanylate kinase family.

It is found in the cytoplasm. The catalysed reaction is GMP + ATP = GDP + ADP. In terms of biological role, essential for recycling GMP and indirectly, cGMP. The protein is Guanylate kinase of Shouchella clausii (strain KSM-K16) (Alkalihalobacillus clausii).